Here is a 278-residue protein sequence, read N- to C-terminus: NADPH-dependent 7-cyano-7-deazaguanine reductase (278 aa).

87 to 89 (IES) is a substrate binding site. 89–90 (SK) serves as a coordination point for NADPH. The active-site Thioimide intermediate is Cys-185. Asp-192 (proton donor) is an active-site residue. A substrate-binding site is contributed by 224–225 (HE). NADPH is bound at residue 253–254 (RG). The tract at residues 255 to 278 (GLDINPYRSTNPTFSVQNHRSFRQ) is disordered. The segment covering 261–278 (YRSTNPTFSVQNHRSFRQ) has biased composition (polar residues).

Belongs to the GTP cyclohydrolase I family. QueF type 2 subfamily. In terms of assembly, homodimer.

It is found in the cytoplasm. The catalysed reaction is 7-aminomethyl-7-carbaguanine + 2 NADP(+) = 7-cyano-7-deazaguanine + 2 NADPH + 3 H(+). It functions in the pathway tRNA modification; tRNA-queuosine biosynthesis. Its function is as follows. Catalyzes the NADPH-dependent reduction of 7-cyano-7-deazaguanine (preQ0) to 7-aminomethyl-7-deazaguanine (preQ1). This is NADPH-dependent 7-cyano-7-deazaguanine reductase from Coxiella burnetii (strain Dugway 5J108-111).